The chain runs to 63 residues: Beta-defensin 3 (63 aa).

An N-terminal signal peptide occupies residues 1 to 20 (MRIHYLLFSFLLVLLSPLSA). Residues 21–22 (FS) constitute a propeptide that is removed on maturation. Intrachain disulfides connect C31–C59, C38–C52, and C42–C60.

Belongs to the beta-defensin family.

The protein resides in the secreted. Has bactericidal activity. The polypeptide is Beta-defensin 3 (Defb3) (Rattus norvegicus (Rat)).